We begin with the raw amino-acid sequence, 2161 residues long: SH3 and multiple ankyrin repeat domains protein 1 (2161 aa).

The disordered stretch occupies residues 1 to 53 (MTHSPATSEDEERHSASECPEGGSESDSSPDGPGRGPRGTRGQGSGAPGSLAS). Residues 17–32 (SECPEGGSESDSSPDG) show a composition bias toward low complexity. The span at 33–47 (PGRGPRGTRGQGSGA) shows a compositional bias: gly residues. At Y186 the chain carries Phosphotyrosine. ANK repeat units lie at residues 212–245 (SGET…FRAR), 246–278 (DGMT…YKDR), 279–312 (RGLT…IADE), 313–345 (NGWQ…AQNA), 346–378 (SGNT…VKNN), and 379–395 (NGQT…NFEL). Disordered stretches follow at residues 412-433 (ESPK…VPPA) and 455-546 (GAAS…SRGR). The segment covering 455-479 (GAASSGAPGPTSGSQGQSQPSAPTT) has biased composition (low complexity). A compositionally biased stretch (gly residues) spans 527–542 (PAGGTGGSGGPGGSLG). Phosphoserine is present on S540. At R544 the chain carries Omega-N-methylarginine. The 60-residue stretch at 554–613 (VPGRSFMAVKSYQAQAEGEISLSKGEKIKVLSIGEGGFWEGQVKGRVGWFPSDCLEEVAN) folds into the SH3 domain. The PDZ domain occupies 663–757 (TVLLQKKDSE…TLMVKVVMVT (95 aa)). A phosphoserine mark is found at S671 and S791. A disordered region spans residues 832–886 (TISASESPGPGGLASLGKHRPKGFFATESSFDPHHRAQPSYERPSFLPPGPGLML). Phosphoserine is present on S890. 7 disordered regions span residues 909–1229 (SRSL…LDFT), 1241–1289 (RREG…KSID), 1353–1720 (LGLA…GVAS), 1734–1785 (GQAF…PTSP), 1827–1860 (LPTA…QPQA), 1892–1983 (PWAR…TRHL), and 1996–2023 (RRAP…LPIL). Pro residues predominate over residues 920–939 (IPPPPTTSPPEPPYSTPPVP). Position 950 is an omega-N-methylarginine (R950). A compositionally biased stretch (basic residues) spans 996–1020 (AHHHPPHHHHHHAPPPQPHHHHAHP). 3 positions are modified to omega-N-methylarginine: R1051, R1090, and R1101. Over residues 1127 to 1144 (PPAPSPTSPASPQPPPAV) the composition is skewed to pro residues. Residues 1164–1181 (STSSSGRSSQGSSTEAEP) show a composition bias toward low complexity. Over residues 1199 to 1220 (SPAPAMSPVPPSPSPVPTPASP) the composition is skewed to pro residues. The segment covering 1241–1252 (RREGGWQNEARR) has biased composition (basic and acidic residues). An Asymmetric dimethylarginine modification is found at R1253. Phosphoserine is present on S1287. Residues 1359 to 1368 (ARERALKESS) are compositionally biased toward basic and acidic residues. The span at 1374–1391 (PQPPPRPPSPRYEAPPPT) shows a compositional bias: pro residues. At R1423 the chain carries Omega-N-methylarginine. S1436 carries the phosphoserine modification. Composition is skewed to pro residues over residues 1517-1532 (GVPP…PSPT) and 1583-1609 (PLTP…PPPA). A compositionally biased stretch (polar residues) spans 1618–1636 (DSTASSLTSYDSEVATLTQ). Pro residues predominate over residues 1644–1670 (DPHPPGPPAPAAPAPAAPQPGPDPPPG). The span at 1678–1688 (VDSRSSSDHPL) shows a compositional bias: basic and acidic residues. Low complexity predominate over residues 1692–1702 (SSASTLSSLSA). Gly residues-rich tracts occupy residues 1703–1718 (EGGG…GAGV) and 1764–1774 (ASGGLRPGPSG). Positions 1775–1785 (GLRDPVTPTSP) are enriched in low complexity. Residues 1844–1855 (PGPPPPPLPGPL) show a composition bias toward pro residues. At R1895 the chain carries Omega-N-methylarginine. Low complexity-rich tracts occupy residues 1917-1940 (SSLQ…VSSL), 1954-1980 (TGTG…STST), and 1996-2006 (RRAPSPSLLPA). Omega-N-methylarginine is present on residues R2016, R2036, and R2074. Residues 2098–2161 (WTKFDVADWL…DRALKFFLER (64 aa)) form the SAM domain.

This sequence belongs to the SHANK family. As to quaternary structure, may homomultimerize via its SAM domain. Interacts with the C-terminus of SSTR2 via the PDZ domain. Interacts with IGSF9, SHARPIN, SPTAN1, HOMER1 and DLGAP1/GKAP isoforms 1 and 2. Part of a complex with DLG4/PSD-95 and DLGAP1/GKAP. Interacts with BAIAP2. Interacts with HOMER1 and HOMER3. As to expression, expressed in brain particularly in the amygdala, hippocampus, substantia nigra and thalamus. Isoform 2 seems to be expressed ubiquitously.

It localises to the cytoplasm. Its subcellular location is the postsynaptic density. The protein localises to the synapse. Its function is as follows. Seems to be an adapter protein in the postsynaptic density (PSD) of excitatory synapses that interconnects receptors of the postsynaptic membrane including NMDA-type and metabotropic glutamate receptors via complexes with GKAP/PSD-95 and Homer, respectively, and the actin-based cytoskeleton. Plays a role in the structural and functional organization of the dendritic spine and synaptic junction. This chain is SH3 and multiple ankyrin repeat domains protein 1 (SHANK1), found in Homo sapiens (Human).